The chain runs to 221 residues: Pectate lyase C (221 aa).

The N-terminal stretch at M1–A28 is a signal peptide.

This sequence belongs to the polysaccharide lyase 3 family. It depends on Ca(2+) as a cofactor.

Its subcellular location is the secreted. The enzyme catalyses Eliminative cleavage of (1-&gt;4)-alpha-D-galacturonan to give oligosaccharides with 4-deoxy-alpha-D-galact-4-enuronosyl groups at their non-reducing ends.. It catalyses the reaction Eliminative cleavage of (1-&gt;4)-alpha-D-galacturonan methyl ester to give oligosaccharides with 4-deoxy-6-O-methyl-alpha-D-galact-4-enuronosyl groups at their non-reducing ends.. It functions in the pathway glycan metabolism; pectin degradation; 2-dehydro-3-deoxy-D-gluconate from pectin: step 2/5. Catalyzes the depolymerization of both polygalacturonate and pectins of methyl esterification degree from 22 to 89%, with an endo mode of action. In contrast to the majority of pectate lyases, displays high activity on highly methylated pectins. The chain is Pectate lyase C (pelC) from Bacillus licheniformis (strain ATCC 14580 / DSM 13 / JCM 2505 / CCUG 7422 / NBRC 12200 / NCIMB 9375 / NCTC 10341 / NRRL NRS-1264 / Gibson 46).